A 139-amino-acid chain; its full sequence is Nucleoside diphosphate kinase (139 aa).

Residues Lys-10, Phe-58, Arg-86, Thr-92, Arg-104, and Asn-114 each contribute to the ATP site. His-117 functions as the Pros-phosphohistidine intermediate in the catalytic mechanism.

The protein belongs to the NDK family. As to quaternary structure, homotetramer. The cofactor is Mg(2+).

It localises to the cytoplasm. The catalysed reaction is a 2'-deoxyribonucleoside 5'-diphosphate + ATP = a 2'-deoxyribonucleoside 5'-triphosphate + ADP. The enzyme catalyses a ribonucleoside 5'-diphosphate + ATP = a ribonucleoside 5'-triphosphate + ADP. In terms of biological role, major role in the synthesis of nucleoside triphosphates other than ATP. The ATP gamma phosphate is transferred to the NDP beta phosphate via a ping-pong mechanism, using a phosphorylated active-site intermediate. The chain is Nucleoside diphosphate kinase from Rhodococcus erythropolis (strain PR4 / NBRC 100887).